Consider the following 60-residue polypeptide: Large ribosomal subunit protein bL32 (60 aa).

The segment at 1 to 21 (MAVPARHTSKAKKNKRRTHYK) is disordered. Over residues 7–20 (HTSKAKKNKRRTHY) the composition is skewed to basic residues.

This sequence belongs to the bacterial ribosomal protein bL32 family.

The polypeptide is Large ribosomal subunit protein bL32 (Streptococcus uberis (strain ATCC BAA-854 / 0140J)).